The primary structure comprises 440 residues: MGILGMRRFIREHELSVHLSIQMERGLYIPIAVDTWNVLTPIMRRLDPGNMMDPVERTLRGIMQVFSLLNKKSCFPIFVLDGGRKRAFKGPVKHDYHNIDHRAPTDGDDLEASANENQPHSLAGNAPRLASGARGAHQSSRRKTALRATPHYKLCWDLITASGFPTVYVKGMEADYGCANLFHTKTVMYVWSSDSDMVFMGCDVITDLTPAFPVAVFSKHVLEYLNMTQREFANTFVDCHTNLHSPETIYSFAAKLLEHRCGSAIDEPPAASEESSASDQQSADEDEHGAWSRYTRRPPRRADAAAWGAGPGGNGQLKGVSVLCGFPSDARPFDCAPARRRRLPQRREEPAARLKKNREFLAYMNSFIGCKVINNRHTLIKRVPIRQETFDPVEIYRILHEYAPTMANKWCAEMLVKCKLKPVPPLRDVAYGKATQINLC.

2 disordered regions span residues 98 to 144 (NIDH…RRKT) and 265 to 312 (IDEP…AGPG). Residues 266–281 (DEPPAASEESSASDQQ) show a composition bias toward low complexity.

It belongs to the herpesviridae VHS protein family.

It localises to the virion. Minor structural protein that acts as an endoribonuclease during lytic infection. Degrades host mRNAs in the cytoplasm by cutting them at preferred sites, including some in regions of translation initiation. The protein is Virion host shutoff protein (UL41) of Amazona oratrix (yellow-headed parrot).